A 494-amino-acid polypeptide reads, in one-letter code: Glutamyl-tRNA(Gln) amidotransferase subunit A (494 aa).

Residues Lys-79 and Ser-159 each act as charge relay system in the active site. The active-site Acyl-ester intermediate is the Ser-183.

Belongs to the amidase family. GatA subfamily. In terms of assembly, heterotrimer of A, B and C subunits.

It catalyses the reaction L-glutamyl-tRNA(Gln) + L-glutamine + ATP + H2O = L-glutaminyl-tRNA(Gln) + L-glutamate + ADP + phosphate + H(+). In terms of biological role, allows the formation of correctly charged Gln-tRNA(Gln) through the transamidation of misacylated Glu-tRNA(Gln) in organisms which lack glutaminyl-tRNA synthetase. The reaction takes place in the presence of glutamine and ATP through an activated gamma-phospho-Glu-tRNA(Gln). In Bartonella tribocorum (strain CIP 105476 / IBS 506), this protein is Glutamyl-tRNA(Gln) amidotransferase subunit A.